Here is a 410-residue protein sequence, read N- to C-terminus: WD repeat and FYVE domain-containing protein 1 (410 aa).

6 WD repeats span residues 22-61 (GHQD…QYWP), 66-105 (TMAS…NKMN), 112-150 (AHQN…NMLG), 153-192 (FFTS…CSVI), 197-236 (GHEG…GRTL), and 240-279 (GHHD…EEAP). The segment at 281 to 352 (WLESDSCQKC…VCDSCYDSIK (72 aa)) adopts an FYVE-type zinc-finger fold. Cys-287, Cys-290, Cys-314, Cys-317, Cys-322, Cys-325, Cys-344, and Cys-347 together coordinate Zn(2+). One copy of the WD 7 repeat lies at 364 to 403 (EGKHNISHMSMDIARGLMVTCGTDRIVKIWDMTPVVGCSL). Ser-408 is modified (phosphoserine).

In terms of assembly, binds PtdIns3P in vitro with high specificity over other phosphoinositides. Interacts (via WD repeat 2) with tyrosine-phosphorylated TLR3 (via TIR domain) in response to poly(I:C). Interacts with TICAM1 in response to poly(I:C). Interacts with TLR4 in response to LPS.

The protein localises to the early endosome. In terms of biological role, positively regulates TLR3- and TLR4-mediated signaling pathways by bridging the interaction between TLR3 or TLR4 and TICAM1. Promotes TLR3/4 ligand-induced activation of transcription factors IRF3 and NF-kappa-B, as well as the production of IFN-beta and inflammatory cytokines. This chain is WD repeat and FYVE domain-containing protein 1 (WDFY1), found in Homo sapiens (Human).